A 464-amino-acid chain; its full sequence is Protein FAM90A16 (464 aa).

3 disordered regions span residues 1 to 42 (MMAR…DPRL), 70 to 389 (PATL…HDGA), and 415 to 437 (HSPE…SEAP). 2 stretches are compositionally biased toward basic and acidic residues: residues 74 to 89 (GKKE…KPRV) and 97 to 114 (NKDK…DPQR). Positions 180-197 (LASLSPLRKASLSSSSSL) are enriched in low complexity.

The protein belongs to the FAM90 family.

This is Protein FAM90A16 from Homo sapiens (Human).